The following is a 532-amino-acid chain: 56 kDa type-specific antigen (532 aa).

Residues 1-22 (MKKIMLIASAMSALSLPFSASA) form the signal peptide. A helical transmembrane segment spans residues 67–87 (TNGLPFGGTLAAGMTIAPGFR). The tract at residues 401–428 (QEEDAKNQGEGDCKQQQGTSEKSKKGKD) is disordered. Positions 403-413 (EDAKNQGEGDC) are enriched in basic and acidic residues. Residues 480–500 (TGMVASGALGVAINAAEGVYV) form a helical membrane-spanning segment.

It is found in the cell membrane. Functionally, may be an adherent factor for rickettsial adsorption to the host-cell surface and a determinant of virulence of individual rickettsial strain. It is the major outer membrane protein. The chain is 56 kDa type-specific antigen from Orientia tsutsugamushi (Rickettsia tsutsugamushi).